The primary structure comprises 234 residues: 2-C-methyl-D-erythritol 4-phosphate cytidylyltransferase (234 aa).

Belongs to the IspD/TarI cytidylyltransferase family. IspD subfamily.

The enzyme catalyses 2-C-methyl-D-erythritol 4-phosphate + CTP + H(+) = 4-CDP-2-C-methyl-D-erythritol + diphosphate. It participates in isoprenoid biosynthesis; isopentenyl diphosphate biosynthesis via DXP pathway; isopentenyl diphosphate from 1-deoxy-D-xylulose 5-phosphate: step 2/6. Catalyzes the formation of 4-diphosphocytidyl-2-C-methyl-D-erythritol from CTP and 2-C-methyl-D-erythritol 4-phosphate (MEP). In Syntrophus aciditrophicus (strain SB), this protein is 2-C-methyl-D-erythritol 4-phosphate cytidylyltransferase.